Reading from the N-terminus, the 373-residue chain is S-adenosylmethionine:tRNA ribosyltransferase-isomerase (373 aa).

This sequence belongs to the QueA family. Monomer.

The protein resides in the cytoplasm. It catalyses the reaction 7-aminomethyl-7-carbaguanosine(34) in tRNA + S-adenosyl-L-methionine = epoxyqueuosine(34) in tRNA + adenine + L-methionine + 2 H(+). It participates in tRNA modification; tRNA-queuosine biosynthesis. Functionally, transfers and isomerizes the ribose moiety from AdoMet to the 7-aminomethyl group of 7-deazaguanine (preQ1-tRNA) to give epoxyqueuosine (oQ-tRNA). This Rhizobium etli (strain CIAT 652) protein is S-adenosylmethionine:tRNA ribosyltransferase-isomerase.